Reading from the N-terminus, the 68-residue chain is MVQKKSQSSKTVTVEQIGSPIRNSQIQRATLKGLGLNKMHRRRVLEDTLCVRGMIAKVQHLVRVIDES.

Belongs to the universal ribosomal protein uL30 family. Part of the 50S ribosomal subunit.

The protein is Large ribosomal subunit protein uL30 of Bartonella henselae (strain ATCC 49882 / DSM 28221 / CCUG 30454 / Houston 1) (Rochalimaea henselae).